We begin with the raw amino-acid sequence, 439 residues long: Methylenetetrahydrofolate--tRNA-(uracil-5-)-methyltransferase TrmFO (439 aa).

Position 8-13 (8-13) interacts with FAD; sequence GAGLAG.

The protein belongs to the MnmG family. TrmFO subfamily. FAD serves as cofactor.

It is found in the cytoplasm. It catalyses the reaction uridine(54) in tRNA + (6R)-5,10-methylene-5,6,7,8-tetrahydrofolate + NADH + H(+) = 5-methyluridine(54) in tRNA + (6S)-5,6,7,8-tetrahydrofolate + NAD(+). It carries out the reaction uridine(54) in tRNA + (6R)-5,10-methylene-5,6,7,8-tetrahydrofolate + NADPH + H(+) = 5-methyluridine(54) in tRNA + (6S)-5,6,7,8-tetrahydrofolate + NADP(+). In terms of biological role, catalyzes the folate-dependent formation of 5-methyl-uridine at position 54 (M-5-U54) in all tRNAs. The polypeptide is Methylenetetrahydrofolate--tRNA-(uracil-5-)-methyltransferase TrmFO (Lacticaseibacillus paracasei (strain ATCC 334 / BCRC 17002 / CCUG 31169 / CIP 107868 / KCTC 3260 / NRRL B-441) (Lactobacillus paracasei)).